A 334-amino-acid polypeptide reads, in one-letter code: Glyceraldehyde-3-phosphate dehydrogenase 1 (334 aa).

Residues 12 to 13, aspartate 35, and arginine 79 each bind NAD(+); that span reads RI. Residues 152–154, threonine 183, arginine 198, 211–212, and arginine 234 contribute to the D-glyceraldehyde 3-phosphate site; these read SCT and SG. The active-site Nucleophile is the cysteine 153. Position 315 (asparagine 315) interacts with NAD(+).

It belongs to the glyceraldehyde-3-phosphate dehydrogenase family. In terms of assembly, homotetramer.

The protein resides in the cytoplasm. The enzyme catalyses D-glyceraldehyde 3-phosphate + phosphate + NAD(+) = (2R)-3-phospho-glyceroyl phosphate + NADH + H(+). It participates in carbohydrate degradation; glycolysis; pyruvate from D-glyceraldehyde 3-phosphate: step 1/5. Its activity is regulated as follows. Resistant to pentalenolactone. In terms of biological role, catalyzes the oxidative phosphorylation of glyceraldehyde 3-phosphate (G3P) to 1,3-bisphosphoglycerate (BPG) using the cofactor NAD. The first reaction step involves the formation of a hemiacetal intermediate between G3P and a cysteine residue, and this hemiacetal intermediate is then oxidized to a thioester, with concomitant reduction of NAD to NADH. The reduced NADH is then exchanged with the second NAD, and the thioester is attacked by a nucleophilic inorganic phosphate to produce BPG. The sequence is that of Glyceraldehyde-3-phosphate dehydrogenase 1 (gap1) from Streptomyces avermitilis (strain ATCC 31267 / DSM 46492 / JCM 5070 / NBRC 14893 / NCIMB 12804 / NRRL 8165 / MA-4680).